We begin with the raw amino-acid sequence, 115 residues long: U3-lycotoxin-Ls1a (115 aa).

The signal sequence occupies residues 1–20 (MKFVLLFGVLLVTFFSYSSA). A propeptide spanning residues 21-44 (EMLDDFDQADEDELLSLIEKGEAR) is cleaved from the precursor. 4 disulfides stabilise this stretch: cysteine 48-cysteine 63, cysteine 55-cysteine 72, cysteine 62-cysteine 87, and cysteine 74-cysteine 85.

The protein belongs to the neurotoxin 19 (CSTX) family. 01 subfamily. Expressed by the venom gland.

Its subcellular location is the secreted. This chain is U3-lycotoxin-Ls1a, found in Lycosa singoriensis (Wolf spider).